Consider the following 551-residue polypeptide: Gliomedin (551 aa).

The Cytoplasmic portion of the chain corresponds to 1 to 17 (MARGAEGGRGDAGWGLR). The chain crosses the membrane as a helical; Signal-anchor for type II membrane protein span at residues 18 to 39 (GALAAVALLSALNAAGTVFALC). Residues 40 to 551 (QWRGLSSALR…VQFLSTTLNQ (512 aa)) lie on the Extracellular side of the membrane. Positions 72 to 107 (LSRAPRGASAPPQDPASSARNKRSHSGEPAPHIRAE) are disordered. Positions 79 to 90 (ASAPPQDPASSA) are enriched in low complexity. Asn-130 is a glycosylation site (N-linked (GlcNAc...) asparagine). Collagen-like domains are found at residues 137-195 (LTGP…RGEK) and 196-222 (GDHGELGLQGNEGPPGQKGEKGDKGDV). The interval 139-282 (GPSGPPGPPG…GETCAIPNDD (144 aa)) is disordered. Composition is skewed to basic and acidic residues over residues 191-200 (ERGEKGDHGE) and 213-222 (KGEKGDKGDV). Over residues 237 to 253 (PPGPPGPPGPPGPPGPP) the composition is skewed to pro residues. The region spanning 299–546 (QAESMITSIG…LMLYPVQFLS (248 aa)) is the Olfactomedin-like domain. N-linked (GlcNAc...) asparagine glycosylation is found at Asn-329, Asn-357, Asn-378, and Asn-464.

In terms of assembly, homotrimer (via collagen-like domains). Interacts with NRCAM and NFASC/neurofascin. Interaction with glial NRCAM enhances interaction with axonal NFASC. Interacts with MYOC. N-glycosylated. In terms of processing, proteolytic processing by a furin-like protease causes shedding of the ectodomain. Further cleavage by BMP1 releases the olfactomedin-like domain. Specifically expressed in spinal cord, brain, placenta and sciatic nerve. More abundant in peripheral than central nervous system.

It localises to the cell membrane. Its subcellular location is the cell projection. It is found in the axon. The protein resides in the secreted. The protein localises to the extracellular space. It localises to the extracellular matrix. Ligand for NRCAM and NFASC/neurofascin that plays a role in the formation and maintenance of the nodes of Ranvier on myelinated axons. Mediates interaction between Schwann cell microvilli and axons via its interactions with NRCAM and NFASC. Nodes of Ranvier contain clustered sodium channels that are crucial for the saltatory propagation of action potentials along myelinated axons. During development, nodes of Ranvier are formed by the fusion of two heminodes. Required for normal clustering of sodium channels at heminodes; not required for the formation of mature nodes with normal sodium channel clusters. Required, together with NRCAM, for maintaining NFASC and sodium channel clusters at mature nodes of Ranvier. This is Gliomedin (GLDN) from Homo sapiens (Human).